We begin with the raw amino-acid sequence, 275 residues long: NH(3)-dependent NAD(+) synthetase (275 aa).

50 to 57 contributes to the ATP binding site; sequence GISGGVDS. A Mg(2+)-binding site is contributed by Asp-56. Arg-147 serves as a coordination point for deamido-NAD(+). Position 167 (Thr-167) interacts with ATP. Residue Glu-172 participates in Mg(2+) binding. Deamido-NAD(+) is bound by residues Lys-180 and Asp-187. The ATP site is built by Lys-196 and Thr-218. Position 267–268 (267–268) interacts with deamido-NAD(+); sequence HK.

The protein belongs to the NAD synthetase family. Homodimer.

It catalyses the reaction deamido-NAD(+) + NH4(+) + ATP = AMP + diphosphate + NAD(+) + H(+). It participates in cofactor biosynthesis; NAD(+) biosynthesis; NAD(+) from deamido-NAD(+) (ammonia route): step 1/1. Catalyzes the ATP-dependent amidation of deamido-NAD to form NAD. Uses ammonia as a nitrogen source. In Pseudomonas syringae pv. tomato (strain ATCC BAA-871 / DC3000), this protein is NH(3)-dependent NAD(+) synthetase.